The following is a 66-amino-acid chain: Large ribosomal subunit protein bL32 (66 aa).

Belongs to the bacterial ribosomal protein bL32 family.

This chain is Large ribosomal subunit protein bL32, found in Rickettsia akari (strain Hartford).